The chain runs to 168 residues: Probable deoxyuridine 5'-triphosphate nucleotidohydrolase (168 aa).

Belongs to the dCTP deaminase family. Archaeal dUTPase subfamily.

It carries out the reaction dUTP + H2O = dUMP + diphosphate + H(+). Its pathway is pyrimidine metabolism; dUMP biosynthesis; dUMP from dCTP (dUTP route): step 2/2. Its function is as follows. This enzyme is involved in nucleotide metabolism: it produces dUMP, the immediate precursor of thymidine nucleotides and it decreases the intracellular concentration of dUTP so that uracil cannot be incorporated into DNA. In Archaeoglobus fulgidus (strain ATCC 49558 / DSM 4304 / JCM 9628 / NBRC 100126 / VC-16), this protein is Probable deoxyuridine 5'-triphosphate nucleotidohydrolase.